Here is a 286-residue protein sequence, read N- to C-terminus: Shikimate dehydrogenase (NADP(+)) (286 aa).

Shikimate contacts are provided by residues 20–22 (SLS) and threonine 67. Residue lysine 71 is the Proton acceptor of the active site. Residues asparagine 92 and aspartate 107 each contribute to the shikimate site. Residues 132–136 (GAGGA) and methionine 228 contribute to the NADP(+) site. Tyrosine 230 lines the shikimate pocket. Position 251 (glycine 251) interacts with NADP(+).

Belongs to the shikimate dehydrogenase family. In terms of assembly, homodimer.

The catalysed reaction is shikimate + NADP(+) = 3-dehydroshikimate + NADPH + H(+). The protein operates within metabolic intermediate biosynthesis; chorismate biosynthesis; chorismate from D-erythrose 4-phosphate and phosphoenolpyruvate: step 4/7. Its function is as follows. Involved in the biosynthesis of the chorismate, which leads to the biosynthesis of aromatic amino acids. Catalyzes the reversible NADPH linked reduction of 3-dehydroshikimate (DHSA) to yield shikimate (SA). This chain is Shikimate dehydrogenase (NADP(+)), found in Geobacter metallireducens (strain ATCC 53774 / DSM 7210 / GS-15).